A 95-amino-acid chain; its full sequence is Cell division topological specificity factor (95 aa).

Belongs to the MinE family.

Functionally, prevents the cell division inhibition by proteins MinC and MinD at internal division sites while permitting inhibition at polar sites. This ensures cell division at the proper site by restricting the formation of a division septum at the midpoint of the long axis of the cell. In Psychrobacter cryohalolentis (strain ATCC BAA-1226 / DSM 17306 / VKM B-2378 / K5), this protein is Cell division topological specificity factor.